We begin with the raw amino-acid sequence, 2474 residues long: MFKETEIQQRYFATGTGTTMLANRLSYFYDLHGPSISLDTACSSSLNACHLACNSLRLGECDMALAAGCNLFYNPDTIIPLTALGFLSPDGRCYSFDERANGYSRGEGFGMVVLKRLSDAIRDGDCIRAIVRGSSSNQDGNSPGITQPTRQAQVDLINAAYQSAGLSKTQTRFFEAHGTGTPVGDPIEASAISGAFSEYRSEQEPMVVGAVKTNIGHLEGSAGIAGLIKAIMVLEKGIIPPNMGFQTPNPKIPVHDWHLKFPTKPEAWPSKGLRRASINAFGYGGSNAHIIIDDAYHYLLEHGLKGKHQTIEFPPVEGLRPSINGTNGTNGHLNGITNNHSNGHQSTSGSSDDEYILVKRFKGYAPPCRSFFFSTFDEAGAARMAQAYREFLDSTNKSIVAGSEEEQGFLSDLSYTLINHRTSFPWRFSIVADSIAALTNKLEGNPSPVRATADPKLGFVFTGQGAQWYAMGRELLSAYPTFSTSIFAADLYLRELGCPWSLVGELLQNQDKSRIDDPELSQPICTALQVALVDLLASWGIKPAAVVGHSSGEIGAAYATGAISQESAWRLAFYRGALSSRLAKSPDHTNGAMLSVAMSSSSAMSYLEEHVGSAAGRDIVVACINSPRNVTLSGSAVYIDKIKAAADSGGIFARKLKVDNSYHSPLMATIADEYRSLIGDLEAGTNISPGKVAPVFYSSLGGTVISASALKNRDHWVDNLVSPVQFSKAFSLMCSNTSSSAPVKKLGSSAKATVKPPKITQVLEIGPHAALRGPIREIMELTPEVSGIGYESVLRRGTSAVDTALGAANWLWCRGYEVDMSDASIAKDSSLVVNAPGYPFNHSNIYWNESRISKGYRFRPAMRHELLGAPVPDWDPANAVWRNYLRLSENPWVKHHRITGATIYPAAGMLVMAIEASRQMADISRVVKGFRILDARFNVALRVPATQNGLETHFYMQPSRDHPDTVARTVRKFSLSSYEGGEWREHCHGLVVTEYEQPYTVVDDGREDFEFQEACKNRLAGVEKASKVETSFRQLYEHLSTVGLDFGATFQTLRDIRCGDIGEAVATVERQDLESLMPLGYLQDHLIHPTVLDGILQSIIVSLTKGGREIDQVMVPSEIGDLWVSADPSTSKFDAIRVSCSGKFLGIRQAEARIVGIDVDIGKAVCTVDNFVITTVARSEGASSSDAARRLCFNLDYKVDPALLDQETADKTIQPDAKCGATTQQAQLIQEVEMMCFLYIKRFWDRIYNENRDAKSVPYHKKYIAWIKHQLEKYDAGLIPHAMPEWRERAADDQYISQMEIKLLTDGSAEGKLVVNVGRELPNILAGKSDALELLFKDKLVENVYRSGVGAEIGYDRMVAYIDALAHKNPALRVLEVGAGTGGATRPILKCLTTQDISIGFFENAREMFKDSAARMSFRALNIEENLEQQGFSGPGEQYDVICAANVIHATRNLEATLSNARKLLKPGGKLILYEMTNTGMIRTGFAFGLLPGWWLSVEDFRQFTPLAAPNDWSRSLKASGFSGIDLHIYDFPDHRHQMVSVLICTALGDGSEENTPTSSYSSSPIKIITCGAGSGSATQESLATVLEKQASSLSTSVAVVNLQDAVADLKDLQQTRCIFLGDLESNFLEHVHDDDYEAFQKLISSTKTLFWVNQGGGPSPKNPGADMVTGFARCMRAENPGLNFVTLSIDDLGSLDKTSSIILRLLSTGGGNENTFFEKDGAVYIPRITEANTVNHLIAAKTKGEPARSETWQDASNGRALTLQCAVPGLLDSLQFQDDELYEKPLRPYDVEVIGEAFGQECAGVVTRVGTDVERVSVGDSVCGLLRGTFKTFARGSQWQFAKIPSTIDYAVAASVPVVYTTAYYGLHDLARLQAGESILIHWGAGGVGQAAIQLAKAVGAEVFVTVGSIEKRDFVHEHYGIPLHNVLSSRDLSFVHGIKRLTDGRGVDVILNSTAGQTLRASWDCIAPYGRFIEIGKVDIFANAGLPMGPFKKSVTFSFFDIGLISLERGRLFSRVLQDVVDLLAKGSITPPQPLHVYSYSDIQEAFRIMQSGSHMGKLVLKAQDDDHVMVEPSRKPTYYFDPDASYLLSGGLGGLGRSAARWMASRGAKNLILLSRSGTTRPAAQELMKELAAAGVTASAPQCDVSDRAALERVLNDCAKTMPPIKGCIQGSMVLKDSIFSNMSPEDYYTAVRPKVVASRNLHELLPQDMDFFILLSSASGVVGNRGQSNYCVGNTYQDSLARHRVALGLPGVAVDLGMILSVGFAAENQESMANLRQEGFNAMREDEFLALLDMLCGPNGTYSTNANREMEASSFAQIAVGLEAPATLRIKGIPEPAWMTDPLFKHLYQIRGEGDHEGEGDGEGSATSCSTLLPAAASLADAAKIVSAAIVQKLCKALSSSERDIDVSKPLHSYGVDSLVAVELRAWFMKEVGSDVAVFDIMSGQSLEELAELAAKRSSFASFDDEKEAD.

The 294-residue stretch at Met1–Asp294 folds into the Ketosynthase family 3 (KS3) domain. Active-site for beta-ketoacyl synthase activity residues include Cys42, His177, and His217. The 340-residue stretch at Phe459–Thr798 folds into the Malonyl-CoA:ACP transacylase (MAT) domain. Residues His864–Pro998 are N-terminal hotdog fold. The PKS/mFAS DH domain occupies His864 to Ala1182. His896 (proton acceptor; for dehydratase activity) is an active-site residue. The segment at Lys1027–Ala1182 is C-terminal hotdog fold. The active-site Proton donor; for dehydratase activity is the Asp1093. Residues Val1232–His1535 form a methyltransferase (CMet) domain region. One can recognise an Enoyl reductase (ER) domain in the interval Gly1770–Leu2063. In terms of domain architecture, Ketoreductase (KR) spans Ala2087–Ile2263. The 78-residue stretch at Asp2385–Ser2462 folds into the Carrier domain. Ser2422 carries the O-(pantetheine 4'-phosphoryl)serine modification.

The cofactor is pantetheine 4'-phosphate.

It participates in secondary metabolite biosynthesis. In terms of biological role, highly reducing polyketide synthase; part of the gene cluster that mediates the biosynthesis of the gamma-pyrones fusapyrone (FPY) and deoxyfusapyrone (dFPY). FPY is an undecaketide and thus likely synthesized by the polyketide synthase FPY1 from acetyl-CoA functioning as starter unit and the addition of 10 malonyl-CoA extender units by successive Claisen-condensations. Next to this, FPY shares some rare features: C-glycosylated 4-deoxyglucose at C-3, a gem-dimethyl group at C-13, and an alpha-beta to beta-gamma double bond shift at C-20. During FPY biosynthesis mono-C-methyl groups are transferred to the tetra-, penta-, hexa- and heptaketide, while two C-methyl groups are transferred to the nonaketide, suggesting that the CMet domain is programmed to selectively catalyze two successive C-alpha-methylation reactions of the nonaketide, while other alpha-carbons are non- or mono-methylated only. While the origin of the 4'-deoxyglucose moiety remains opaque, its transfer to C-3 is most likely mediated by the C-glycosyltransferase FPY2. Next to this, the hydroxyl group present at C-33 and discriminating between FPY and dFPY, is likely to be installed by the cytochrome P450 monooxygenase FPY7. No putative function can be predicted for the remaining genes FPY3-FPY6. This chain is Highly reducing polyketide synthase 40, found in Fusarium mangiferae (Mango malformation disease fungus).